Reading from the N-terminus, the 547-residue chain is Malolactic enzyme (547 aa).

The active-site Proton donor is Tyr92. Residue Lys165 is the Proton acceptor of the active site. Residue Lys165 participates in substrate binding. Residues Glu236, Asp237, and Asp260 each coordinate Mn(2+). Residues 293–296 (AGTA), Asn405, and Asn450 each bind NAD(+). Substrate is bound at residue Asn450.

Belongs to the malic enzymes family. As to quaternary structure, homodimer. It depends on Mn(2+) as a cofactor. NAD(+) is required as a cofactor.

It catalyses the reaction (S)-malate + H(+) = (S)-lactate + CO2. Involved in the malolactic fermentation (MLF) of wine, which results in a natural decrease in acidity and favorable changes in wine flavors. Catalyzes the decarboxylation of L-malate to L-lactate. This Lactiplantibacillus plantarum (strain ATCC BAA-793 / NCIMB 8826 / WCFS1) (Lactobacillus plantarum) protein is Malolactic enzyme.